Reading from the N-terminus, the 524-residue chain is GMP synthase [glutamine-hydrolyzing] (524 aa).

Residues 7 to 196 enclose the Glutamine amidotransferase type-1 domain; that stretch reads PVLVVDFGAQ…LHELAGIPAS (190 aa). Cysteine 84 (nucleophile) is an active-site residue. Residues histidine 170 and glutamate 172 contribute to the active site. A GMPS ATP-PPase domain is found at 197-398; the sequence is WTPSNIADVL…LGLPEEIVAR (202 aa). 224–230 serves as a coordination point for ATP; sequence SGGVDSA.

As to quaternary structure, homodimer.

The enzyme catalyses XMP + L-glutamine + ATP + H2O = GMP + L-glutamate + AMP + diphosphate + 2 H(+). The protein operates within purine metabolism; GMP biosynthesis; GMP from XMP (L-Gln route): step 1/1. Catalyzes the synthesis of GMP from XMP. This chain is GMP synthase [glutamine-hydrolyzing], found in Nocardia farcinica (strain IFM 10152).